The primary structure comprises 467 residues: Chromosomal replication initiator protein DnaA (467 aa).

The segment at 1-90 is domain I, interacts with DnaA modulators; it reads MSLSLWQQCL…KSVTQTPQAA (90 aa). Positions 91–130 are domain II; sequence VTSNVAAPAQVAQTQPQRAAPSTRSGWDNVPAPAEPTYRS. Over residues 97–111 the composition is skewed to low complexity; that stretch reads APAQVAQTQPQRAAP. The interval 97–119 is disordered; it reads APAQVAQTQPQRAAPSTRSGWDN. Residues 131-347 are domain III, AAA+ region; that stretch reads NVNVKHTFDN…GALNRVIANA (217 aa). ATP is bound by residues glycine 175, glycine 177, lysine 178, and threonine 179. Residues 348 to 467 form a domain IV, binds dsDNA region; the sequence is NFTGRAITID…FSNLIRTLSS (120 aa).

Belongs to the DnaA family. Oligomerizes as a right-handed, spiral filament on DNA at oriC.

It is found in the cytoplasm. Functionally, plays an essential role in the initiation and regulation of chromosomal replication. ATP-DnaA binds to the origin of replication (oriC) to initiate formation of the DNA replication initiation complex once per cell cycle. Binds the DnaA box (a 9 base pair repeat at the origin) and separates the double-stranded (ds)DNA. Forms a right-handed helical filament on oriC DNA; dsDNA binds to the exterior of the filament while single-stranded (ss)DNA is stabiized in the filament's interior. The ATP-DnaA-oriC complex binds and stabilizes one strand of the AT-rich DNA unwinding element (DUE), permitting loading of DNA polymerase. After initiation quickly degrades to an ADP-DnaA complex that is not apt for DNA replication. Binds acidic phospholipids. This Escherichia coli O157:H7 protein is Chromosomal replication initiator protein DnaA.